The chain runs to 252 residues: Sulfoacetaldehyde reductase 2 (252 aa).

Residue 6 to 30 coordinates NADP(+); that stretch reads LITGATSGFGRAAARRFADAGWSLI. Serine 139 serves as a coordination point for substrate. The active-site Proton acceptor is the tyrosine 152.

It belongs to the short-chain dehydrogenases/reductases (SDR) family. As to quaternary structure, homodimer and heterotetramer.

The catalysed reaction is 2-hydroxyethane-1-sulfonate + NADP(+) = sulfoacetaldehyde + NADPH + H(+). It participates in organosulfur degradation. Catalyzes the formation of isethionate from 2-sulfoacetaldehyde in the deaminative pathway of taurine. Constitutively expressed enzyme that only mediates a small part of the activity observed in taurine-grown cells. The protein is Sulfoacetaldehyde reductase 2 (isfD2) of Chromohalobacter salexigens (strain ATCC BAA-138 / DSM 3043 / CIP 106854 / NCIMB 13768 / 1H11).